We begin with the raw amino-acid sequence, 286 residues long: B3 domain-containing protein REM20 (286 aa).

Positions 9–102 (PRFFKVFLVE…TFEVSVFDRW (94 aa)) form a DNA-binding region, TF-B3. Positions 117-161 (SDSDSDSVVEDEKDSTDVVEDDDDEDEDEDEDDDGSFDEDEEISQ) are disordered. Residues 119–159 (SDSDSVVEDEKDSTDVVEDDDDEDEDEDEDDDGSFDEDEEI) are compositionally biased toward acidic residues.

Its subcellular location is the nucleus. This Arabidopsis thaliana (Mouse-ear cress) protein is B3 domain-containing protein REM20 (REM20).